Consider the following 202-residue polypeptide: Holliday junction branch migration complex subunit RuvA (202 aa).

Residues 1–65 (MIGYLEGRVV…EDALELFGFA (65 aa)) are domain I. Residues 66 to 144 (SLDDRETFRT…GRAPAAGLAP (79 aa)) are domain II. Residues 145–155 (SVPIPGGVAGD) are flexible linker. Positions 155–202 (DVVAGLTNLGYPEPEARQVAAEVLEAEPDLDVAAALRQALKRLASAKK) are domain III.

This sequence belongs to the RuvA family. In terms of assembly, homotetramer. Forms an RuvA(8)-RuvB(12)-Holliday junction (HJ) complex. HJ DNA is sandwiched between 2 RuvA tetramers; dsDNA enters through RuvA and exits via RuvB. An RuvB hexamer assembles on each DNA strand where it exits the tetramer. Each RuvB hexamer is contacted by two RuvA subunits (via domain III) on 2 adjacent RuvB subunits; this complex drives branch migration. In the full resolvosome a probable DNA-RuvA(4)-RuvB(12)-RuvC(2) complex forms which resolves the HJ.

It localises to the cytoplasm. Its function is as follows. The RuvA-RuvB-RuvC complex processes Holliday junction (HJ) DNA during genetic recombination and DNA repair, while the RuvA-RuvB complex plays an important role in the rescue of blocked DNA replication forks via replication fork reversal (RFR). RuvA specifically binds to HJ cruciform DNA, conferring on it an open structure. The RuvB hexamer acts as an ATP-dependent pump, pulling dsDNA into and through the RuvAB complex. HJ branch migration allows RuvC to scan DNA until it finds its consensus sequence, where it cleaves and resolves the cruciform DNA. This is Holliday junction branch migration complex subunit RuvA from Solidesulfovibrio magneticus (strain ATCC 700980 / DSM 13731 / RS-1) (Desulfovibrio magneticus).